A 344-amino-acid polypeptide reads, in one-letter code: Heat-inducible transcription repressor HrcA (344 aa).

This sequence belongs to the HrcA family.

Functionally, negative regulator of class I heat shock genes (grpE-dnaK-dnaJ and groELS operons). Prevents heat-shock induction of these operons. The chain is Heat-inducible transcription repressor HrcA from Geobacillus sp. (strain WCH70).